The sequence spans 332 residues: Ketol-acid reductoisomerase (NADP(+)) (332 aa).

Residues 2 to 182 (AKIYTDKDVS…GATRAGVIET (181 aa)) enclose the KARI N-terminal Rossmann domain. NADP(+) contacts are provided by residues 25–28 (YGSQ), Ser-53, and 83–86 (DMIQ). His-108 is an active-site residue. Gly-134 is an NADP(+) binding site. The region spanning 183-328 (TFKEETETDL…RSLRDIILRG (146 aa)) is the KARI C-terminal knotted domain. Positions 191, 195, 227, and 231 each coordinate Mg(2+). Ser-252 lines the substrate pocket.

The protein belongs to the ketol-acid reductoisomerase family. The cofactor is Mg(2+).

It carries out the reaction (2R)-2,3-dihydroxy-3-methylbutanoate + NADP(+) = (2S)-2-acetolactate + NADPH + H(+). The catalysed reaction is (2R,3R)-2,3-dihydroxy-3-methylpentanoate + NADP(+) = (S)-2-ethyl-2-hydroxy-3-oxobutanoate + NADPH + H(+). It functions in the pathway amino-acid biosynthesis; L-isoleucine biosynthesis; L-isoleucine from 2-oxobutanoate: step 2/4. It participates in amino-acid biosynthesis; L-valine biosynthesis; L-valine from pyruvate: step 2/4. In terms of biological role, involved in the biosynthesis of branched-chain amino acids (BCAA). Catalyzes an alkyl-migration followed by a ketol-acid reduction of (S)-2-acetolactate (S2AL) to yield (R)-2,3-dihydroxy-isovalerate. In the isomerase reaction, S2AL is rearranged via a Mg-dependent methyl migration to produce 3-hydroxy-3-methyl-2-ketobutyrate (HMKB). In the reductase reaction, this 2-ketoacid undergoes a metal-dependent reduction by NADPH to yield (R)-2,3-dihydroxy-isovalerate. In Sulfolobus acidocaldarius (strain ATCC 33909 / DSM 639 / JCM 8929 / NBRC 15157 / NCIMB 11770), this protein is Ketol-acid reductoisomerase (NADP(+)).